Reading from the N-terminus, the 592-residue chain is ATP-binding protein Uup (592 aa).

ABC transporter domains lie at 1–221 and 289–516; these read MPLI…RIEK and FKLK…KSNI. Residues 36 to 43 and 321 to 328 contribute to the ATP site; these read GKNGAGKS and GNNGSGKS. Positions 516–550 form a coiled coil; the sequence is ISFLKTKQNQVKKELKKVLNEIEKIENSIKTLKIQ. A C-terminal domain (CTD), binds DNA region spans residues 518-592; that stretch reads FLKTKQNQVK…IYWENLEKKL (75 aa).

Belongs to the ABC transporter superfamily. ABCF family. Uup subfamily.

It localises to the cytoplasm. It carries out the reaction ATP + H2O = ADP + phosphate + H(+). Its function is as follows. Probably plays a role in ribosome assembly or function. May be involved in resolution of branched DNA intermediates that result from template switching in postreplication gaps. Binds DNA and has ATPase activity. This is ATP-binding protein Uup from Buchnera aphidicola subsp. Schizaphis graminum (strain Sg).